Consider the following 306-residue polypeptide: Probable cobalamin biosynthesis protein CobD (306 aa).

The next 5 membrane-spanning stretches (helical) occupy residues 54–74 (LFGFLNVILVLAIVFFMTYEI), 88–108 (ISIYSIILSFSIGHKSLIEFS), 155–175 (ITDSIIAPLIYAAIFGLPGAF), 215–235 (IAGMLLIISAPFYGGNIKSAI), and 286–306 (SLKAVDYSVLLFLIIYTVLLM).

This sequence belongs to the CobD/CbiB family.

It is found in the cell membrane. The protein operates within cofactor biosynthesis; adenosylcobalamin biosynthesis. Converts cobyric acid to cobinamide by the addition of aminopropanol on the F carboxylic group. The polypeptide is Probable cobalamin biosynthesis protein CobD (Methanococcus maripaludis (strain C7 / ATCC BAA-1331)).